A 400-amino-acid chain; its full sequence is Glycine betaine/proline betaine transport system ATP-binding protein ProV (400 aa).

Positions 29–265 (LSKEQILEKT…PANDYVRTFF (237 aa)) constitute an ABC transporter domain. 61-68 (GLSGSGKS) lines the ATP pocket. CBS domains are found at residues 282 to 341 (RTPN…GLDA) and 343 to 400 (LIDA…VNNG).

Belongs to the ABC transporter superfamily. In terms of assembly, the complex is composed of two ATP-binding proteins (ProV), two transmembrane proteins (ProW) and a solute-binding protein (ProX).

It is found in the cell inner membrane. In terms of biological role, part of the ProU ABC transporter complex involved in glycine betaine and proline betaine uptake. Probably responsible for energy coupling to the transport system. This Escherichia coli (strain K12) protein is Glycine betaine/proline betaine transport system ATP-binding protein ProV.